The primary structure comprises 89 residues: Snake venom serine protease rhinocerase (89 aa).

In terms of domain architecture, Peptidase S1 spans 1–89 (VIGGAECDIN…KVFDYIPWIK (89 aa)). Residue D45 is the Charge relay system of the active site. A disulfide bridge links C64 with C69.

The protein belongs to the peptidase S1 family. Snake venom subfamily. Post-translationally, glycosylated. Expressed by the venom gland.

The protein resides in the secreted. Inhibited by PMSF. Not inhibited by benzamidine. Snake venom serine protease that cleaves fibrinogen alpha and beta chains (FGA and FGB), but not gamma chains. Exhibits fibrinolytic and kininogenolytic. Preferentially cleaves after Arg and Lys residues. This chain is Snake venom serine protease rhinocerase, found in Bitis rhinoceros (West African gaboon viper).